Reading from the N-terminus, the 433-residue chain is Protein MTH1 (433 aa).

The segment at 1–117 is disordered; the sequence is MFVSPPPATS…SRRSSVAESG (117 aa). Over residues 9 to 47 the composition is skewed to polar residues; it reads TSKNQVLQRRPLESTNSNHGFASSLQAIPENTMSGSDNA. Over residues 48–64 the composition is skewed to low complexity; that stretch reads SFQSLPLSMSSSQSTTS. Positions 77-87 are enriched in basic and acidic residues; sequence YTDRARDEIKK.

The protein to yeast STD1/MSN3.

The polypeptide is Protein MTH1 (MTH1) (Saccharomyces cerevisiae (strain ATCC 204508 / S288c) (Baker's yeast)).